A 385-amino-acid chain; its full sequence is WD repeat-containing protein 74 (385 aa).

WD repeat units lie at residues 40–80 (RREE…FQGQ), 83–122 (CPGGEGMFRGLAQADGTLITCVDSGILRVWHDKDKDTSSD), 128–168 (RVGP…EPVF), 179–220 (DLRV…RRPV), 224–266 (TYGE…GCLK), and 267–306 (GLAGSVRGLQCHPSKPLLASCGLDRVLRIHRIQNPRGLEH). Ser-214 is modified (phosphoserine). An N6-methyllysine modification is found at Lys-311. A required for nucleolar and nuclear location region spans residues 320 to 385 (SGRDNWEDEP…KKKRPGSTSP (66 aa)). Disordered stretches follow at residues 323 to 345 (DNWEDEPQEPQEPNKVPLEDTET) and 360 to 385 (LSGLEQPQGALQTRRRKKKRPGSTSP). Ser-361 bears the Phosphoserine mark. Basic residues predominate over residues 372–385 (TRRRKKKRPGSTSP).

In terms of assembly, isoform 1 interacts (through WDR repeats) with NVL; the interaction is independent of RNA or pre-60S ribosome particles. Isoform 2 does not interact with NVL. Interacts with MTREX; the interaction dissociation in a late stage of rRNA synthesis is required for appropriate maturation of pre-60S particles and depends on the ATPase activity of NVL.

The protein localises to the nucleus. It localises to the nucleolus. Regulatory protein of the MTREX-exosome complex involved in the synthesis of the 60S ribosomal subunit. Participates in an early cleavage of the pre-rRNA processing pathway in cooperation with NVL. Required for blastocyst formation, is necessary for RNA transcription, processing and/or stability during preimplantation development. The protein is WD repeat-containing protein 74 (WDR74) of Homo sapiens (Human).